We begin with the raw amino-acid sequence, 248 residues long: Protein GrpE (248 aa).

The tract at residues A229–S248 is disordered. Polar residues predominate over residues A238–S248.

This sequence belongs to the GrpE family. In terms of assembly, homodimer.

It is found in the cytoplasm. In terms of biological role, participates actively in the response to hyperosmotic and heat shock by preventing the aggregation of stress-denatured proteins, in association with DnaK and GrpE. It is the nucleotide exchange factor for DnaK and may function as a thermosensor. Unfolded proteins bind initially to DnaJ; upon interaction with the DnaJ-bound protein, DnaK hydrolyzes its bound ATP, resulting in the formation of a stable complex. GrpE releases ADP from DnaK; ATP binding to DnaK triggers the release of the substrate protein, thus completing the reaction cycle. Several rounds of ATP-dependent interactions between DnaJ, DnaK and GrpE are required for fully efficient folding. This is Protein GrpE from Nostoc sp. (strain PCC 7120 / SAG 25.82 / UTEX 2576).